A 157-amino-acid polypeptide reads, in one-letter code: Ribosomal RNA large subunit methyltransferase H (157 aa).

Residues Leu-73, Gly-104, and 121-126 (LSPLTL) contribute to the S-adenosyl-L-methionine site.

This sequence belongs to the RNA methyltransferase RlmH family. In terms of assembly, homodimer.

It localises to the cytoplasm. It catalyses the reaction pseudouridine(1915) in 23S rRNA + S-adenosyl-L-methionine = N(3)-methylpseudouridine(1915) in 23S rRNA + S-adenosyl-L-homocysteine + H(+). Its function is as follows. Specifically methylates the pseudouridine at position 1915 (m3Psi1915) in 23S rRNA. The protein is Ribosomal RNA large subunit methyltransferase H of Acidithiobacillus ferrooxidans (strain ATCC 23270 / DSM 14882 / CIP 104768 / NCIMB 8455) (Ferrobacillus ferrooxidans (strain ATCC 23270)).